The chain runs to 754 residues: 5-methyltetrahydropteroyltriglutamate--homocysteine methyltransferase (754 aa).

Residues 17 to 20 (RELK) and Lys117 each bind 5-methyltetrahydropteroyltri-L-glutamate. L-homocysteine contacts are provided by residues 431–433 (IGS) and Glu484. Residues 431-433 (IGS) and Glu484 each bind L-methionine. 5-methyltetrahydropteroyltri-L-glutamate is bound by residues 515–516 (RC) and Trp561. L-homocysteine is bound at residue Asp599. Asp599 lines the L-methionine pocket. Position 605 (Glu605) interacts with 5-methyltetrahydropteroyltri-L-glutamate. Zn(2+)-binding residues include His641, Cys643, and Glu665. The active-site Proton donor is the His694. Cys726 is a Zn(2+) binding site.

The protein belongs to the vitamin-B12 independent methionine synthase family. Zn(2+) is required as a cofactor.

The enzyme catalyses 5-methyltetrahydropteroyltri-L-glutamate + L-homocysteine = tetrahydropteroyltri-L-glutamate + L-methionine. The protein operates within amino-acid biosynthesis; L-methionine biosynthesis via de novo pathway; L-methionine from L-homocysteine (MetE route): step 1/1. In terms of biological role, catalyzes the transfer of a methyl group from 5-methyltetrahydrofolate to homocysteine resulting in methionine formation. The sequence is that of 5-methyltetrahydropteroyltriglutamate--homocysteine methyltransferase from Salmonella paratyphi A (strain ATCC 9150 / SARB42).